The chain runs to 228 residues: 2,3-bisphosphoglycerate-dependent phosphoglycerate mutase (228 aa).

Residues 8–15, 21–22, arginine 60, 87–90, lysine 98, 114–115, and 180–181 contribute to the substrate site; these read RHGQSEWN, TG, ERHY, RR, and GN. Catalysis depends on histidine 9, which acts as the Tele-phosphohistidine intermediate. Glutamate 87 (proton donor/acceptor) is an active-site residue.

The protein belongs to the phosphoglycerate mutase family. BPG-dependent PGAM subfamily. As to quaternary structure, homodimer.

It carries out the reaction (2R)-2-phosphoglycerate = (2R)-3-phosphoglycerate. It functions in the pathway carbohydrate degradation; glycolysis; pyruvate from D-glyceraldehyde 3-phosphate: step 3/5. In terms of biological role, catalyzes the interconversion of 2-phosphoglycerate and 3-phosphoglycerate. The sequence is that of 2,3-bisphosphoglycerate-dependent phosphoglycerate mutase from Zymomonas mobilis subsp. mobilis (strain ATCC 31821 / ZM4 / CP4).